We begin with the raw amino-acid sequence, 163 residues long: Phosphopantetheine adenylyltransferase (163 aa).

A substrate-binding site is contributed by T10. Residues 10–11 and H18 each bind ATP; that span reads TF. Substrate is bound by residues K42, L74, and R88. ATP-binding positions include 89 to 91, E99, and 124 to 130; these read GLR and NSFISST.

This sequence belongs to the bacterial CoaD family. Homohexamer. Mg(2+) is required as a cofactor.

The protein localises to the cytoplasm. It catalyses the reaction (R)-4'-phosphopantetheine + ATP + H(+) = 3'-dephospho-CoA + diphosphate. The protein operates within cofactor biosynthesis; coenzyme A biosynthesis; CoA from (R)-pantothenate: step 4/5. Its function is as follows. Reversibly transfers an adenylyl group from ATP to 4'-phosphopantetheine, yielding dephospho-CoA (dPCoA) and pyrophosphate. This chain is Phosphopantetheine adenylyltransferase, found in Shewanella baltica (strain OS223).